Here is a 387-residue protein sequence, read N- to C-terminus: Major outer membrane porin (387 aa).

The first 22 residues, 1–22 (MKKLLKSVLAFAVLGSASSLHA), serve as a signal peptide directing secretion.

Belongs to the chlamydial porin (CP) (TC 1.B.2) family. As to quaternary structure, part of a disulfide cross-linked outer membrane complex (COMC) composed of the major outer membrane porin (MOMP), the small cysteine-rich protein (OmcA) and the large cysteine-rich periplasmic protein (OmcB).

It localises to the cell outer membrane. Functionally, in elementary bodies (EBs, the infectious stage, which is able to survive outside the host cell) provides the structural integrity of the outer envelope through disulfide cross-links with the small cysteine-rich protein and the large cysteine-rich periplasmic protein. It has been described in publications as the Sarkosyl-insoluble COMC (Chlamydia outer membrane complex), and serves as the functional equivalent of peptidoglycan. Permits diffusion of specific solutes through the outer membrane. This Chlamydia muridarum (strain MoPn / Nigg) protein is Major outer membrane porin (ompA).